Here is a 153-residue protein sequence, read N- to C-terminus: Ribosome maturation factor RimP (153 aa).

Belongs to the RimP family.

It localises to the cytoplasm. In terms of biological role, required for maturation of 30S ribosomal subunits. This chain is Ribosome maturation factor RimP, found in Histophilus somni (strain 2336) (Haemophilus somnus).